Reading from the N-terminus, the 30-residue chain is Dendrotoxin A (30 aa).

Cys-3 and Cys-22 are oxidised to a cystine.

It belongs to the three-finger toxin family. Short-chain subfamily. Acn-esterase inhibitor sub-subfamily. In terms of processing, contains 4 disulfide bonds. As to expression, expressed by the venom gland.

The protein resides in the secreted. Functionally, inhibits acetylcholinesterase. Has been described to inhibit both the slowly and the rapidly inactivating phases of potassium efflux. The sequence is that of Dendrotoxin A from Dendroaspis angusticeps (Eastern green mamba).